The sequence spans 168 residues: Protein-export protein SecB (168 aa).

The protein belongs to the SecB family. In terms of assembly, homotetramer, a dimer of dimers. One homotetramer interacts with 1 SecA dimer.

It localises to the cytoplasm. Functionally, one of the proteins required for the normal export of preproteins out of the cell cytoplasm. It is a molecular chaperone that binds to a subset of precursor proteins, maintaining them in a translocation-competent state. It also specifically binds to its receptor SecA. This is Protein-export protein SecB from Thioalkalivibrio sulfidiphilus (strain HL-EbGR7).